A 538-amino-acid chain; its full sequence is MAWQGTGPSVRGMPGGVRLRLGLLLLQLLLLQRPALGFGDEEERRCDPIRIAMCQNLGYNVTKMPNLVGHELQTDAELQLTTFTPLIQYGCSSQLQFFLCSVYVPMCTEKINIPIGPCGGMCLSVKRRCEPVLKEFGFAWPDSLNCSKFPPQNDHNHMCMEGPGDEEVPLPHKTPIQPGEECHSVGTNSDQYIWVKRSLNCVLKCGYDAGLYSRSAKEFTDIWMAVWASLCFISTTFTVLTFLIDSSRFSYPERPIIFLSMCYNIYSIAYIVRLTVGRERISCDFEEAAEPVLIQEGLKNTGCAIIFLLMYFFGMASSIWWVILTLTWFLAAGLKWGHEAIEMHSSYFHIAAWAIPAVKTIVILIMRLVDADELTGLCYVGNQSLDALTGFVVAPLFTYLVIGTLFIAAGLVALFKIRSNLQKDGTKTDKLERLMVKIGVFSVLYTVPATCVIACYFYEISNWALFRYSADDSNMAVEMLKIFMSLLVGITSGMWIWSAKTLHTWQKCSNRLVNSGKVKREKRGNGWVKPGKGNETVV.

The first 37 residues, 1-37 (MAWQGTGPSVRGMPGGVRLRLGLLLLQLLLLQRPALG), serve as a signal peptide directing secretion. Residues 38-213 (FGDEEERRCD…KCGYDAGLYS (176 aa)) lie on the Extracellular side of the membrane. One can recognise an FZ domain in the interval 41 to 162 (EEERRCDPIR…NDHNHMCMEG (122 aa)). Cystine bridges form between Cys46/Cys107, Cys54/Cys100, Cys91/Cys129, Cys118/Cys159, Cys122/Cys146, Cys182/Cys201, Cys205/Cys283, and Cys303/Cys378. Asn60 carries N-linked (GlcNAc...) asparagine glycosylation. Residue Asn145 is glycosylated (N-linked (GlcNAc...) asparagine). The helical transmembrane segment at 214–244 (RSAKEFTDIWMAVWASLCFISTTFTVLTFLI) threads the bilayer. Topologically, residues 245-250 (DSSRFS) are cytoplasmic. Residues 251 to 276 (YPERPIIFLSMCYNIYSIAYIVRLTV) form a helical membrane-spanning segment. Topologically, residues 277–300 (GRERISCDFEEAAEPVLIQEGLKN) are extracellular. The helical transmembrane segment at 301-334 (TGCAIIFLLMYFFGMASSIWWVILTLTWFLAAGL) threads the bilayer. At 335-337 (KWG) the chain is on the cytoplasmic side. The chain crosses the membrane as a helical span at residues 338 to 366 (HEAIEMHSSYFHIAAWAIPAVKTIVILIM). The Extracellular segment spans residues 367 to 384 (RLVDADELTGLCYVGNQS). N-linked (GlcNAc...) asparagine glycosylation is present at Asn382. Residues 385–419 (LDALTGFVVAPLFTYLVIGTLFIAAGLVALFKIRS) traverse the membrane as a helical segment. The Cytoplasmic segment spans residues 420–432 (NLQKDGTKTDKLE). The helical transmembrane segment at 433 to 461 (RLMVKIGVFSVLYTVPATCVIACYFYEIS) threads the bilayer. Topologically, residues 462–474 (NWALFRYSADDSN) are extracellular. A helical transmembrane segment spans residues 475–496 (MAVEMLKIFMSLLVGITSGMWI). Over 497 to 538 (WSAKTLHTWQKCSNRLVNSGKVKREKRGNGWVKPGKGNETVV) the chain is Cytoplasmic. A Lys-Thr-X-X-X-Trp motif, mediates interaction with the PDZ domain of Dvl family members motif is present at residues 500–505 (KTLHTW). The PDZ-binding motif lies at 536–538 (TVV).

It belongs to the G-protein coupled receptor Fz/Smo family. Interacts with MAGI3 and NDP. Component of a complex, at least composed of TSPAN12, FZD4 and norrin (NDP). Interacts (via FZ domain) with TSKU; TSKU competes with WNT2B for binding to FZD4, inhibiting Wnt signaling and repressing peripheral eye development. Interacts with glypican GPC3. In terms of processing, ubiquitinated by ZNRF3, leading to its degradation by the proteasome.

The protein localises to the cell membrane. Functionally, receptor for Wnt proteins. Most of frizzled receptors are coupled to the beta-catenin (CTNNB1) canonical signaling pathway, which leads to the activation of disheveled proteins, inhibition of GSK-3 kinase, nuclear accumulation of beta-catenin (CTNNB1) and activation of Wnt target genes. Plays a critical role in retinal vascularization by acting as a receptor for Wnt proteins and norrin (NDP). In retina, it can be both activated by Wnt protein-binding, but also by a Wnt-independent signaling via binding of norrin (NDP), promoting in both cases beta-catenin (CTNNB1) accumulation and stimulation of LEF/TCF-mediated transcriptional programs. A second signaling pathway involving PKC and calcium fluxes has been seen for some family members, but it is not yet clear if it represents a distinct pathway or if it can be integrated in the canonical pathway, as PKC seems to be required for Wnt-mediated inactivation of GSK-3 kinase. Both pathways seem to involve interactions with G-proteins. May be involved in transduction and intercellular transmission of polarity information during tissue morphogenesis and/or in differentiated tissues. This is Frizzled-4 (Fzd4) from Rattus norvegicus (Rat).